A 1475-amino-acid polypeptide reads, in one-letter code: MKLKYNKLLVSVVIVTFVTFGLLLAECFGKSIDYQEKSIFPSFVSQGFFETRTNNEEYIIEKIAQTQENGVDMRSTLHFTQHGYLLNNISNLKIKFRQKTYTLNDVCFKPHITIFQQSSSSDQNEYPHYIQRLLLEMQRLSPCLIVTPLNCFYDIYRIHGEISNWNKNTDFLNRRLRNSYIEAIGENDERPYVKSNYGPSLIKSWADHMFDLPSKSFTNSTKDALFQKIKLWLLSIEPRQKTCAASIHSCDTPLDSEHYFNICTDMQSVDNFAEKKTKFKLEDVDEEFAMNLDCVDDQEQFIEWMQELEIRKMYSHVTEKPDYPNVVNQTCDKIFHDLNSTGIEFFDGSRSFSSTKSQFDTMQTEIVLLTPEMLLSAMQHSDFVNGFESIWTIEKAEELIHEFRLALKEETEKFKENRMSKMIRVTSRVLDNTVTTKLQSFSEKQTIHFVVNVHSLIVILFTIFVWSGAPLRSAFMFFVRDALTCLLFCFVCSTDGVIVLDTELIKYIIVLTLANLYFTTRSSFCTERLSRCIQREKRFPINSNFASLITVDTMTDSRQIQYFLSTVTKYQAAQDSYSNELFERFPKNWGCTSILIFPIVFVYWYFIDSNFDKICVSVLPSFCLAAGEELFAKNMFWKEREAMQAKQRLENEEQAESITGSSLEKLFAGNKPVSNTDKANIVKKSSIIRNQKPCLQDLSPGTYDVSNFMKYPHQASRIFREKIIGLYLRILKLRTLGVILCIPAILLIVISIGLLFIPVKRETLHTDSKQDDIFIEFEIFNFSTNWKIVNQNLKQFSEDIESIGTLYTISNWQKSFERFEQETNKNASAEWNILFKWINDEPINSAVTLFSEKSSGNQTIANPFKFRLRYGFDAKNETTVIEIVQKIDELLSKCSKNLSPKAVGVLYEHYHRIAVVWNLFAFNQLTTAGIFIILLSIITFIFAITPTIKATFLFSLLVVGTQIEVAALVHLFSLDHHQIYTNLALFAGFLAAWDPFCALLRYRRRILYKSETRRTPELASKRRVLLPIVATADIAQFFVLLITAFSILAIICSIVPELNIFFVPTVILIVIQIVAVFNSIIVSIATKQMFESEVRHYLHRDLRGSTTAVRVYNLVQKQRLASSLDEPQVELDEFSIKRSSPPCRYYAPPPKYSCKKRSRSSDEDEDSDPNQPGPSNRRSPKTGNKRVRGNGDNTELYIPNRYELIVSGKSVGGNTSAAWNGPGSTLEQNMNALEECFELGVDEYDFDEHDGDEGCELVQDMLDRERNLMNKRSTAQRRESRNIEKMKKSQENLDKEKSEEKISESKKNQDDSIESPNLPGTPANLPVDEPLPPVGRLYIVEHVLPEEYRRDPLTEPPSMEDCIRAHSDPNLPPHPRADQYPASFTRPMVEYCEDIYWTHRTGQLPPGLQVPRRPYDYYHITERTPPPEDLNWVPPAESPPIPIPQQAFDLLEERRRNHREQQDEAREGDLSDPEV.

The N-terminal stretch at 1–31 (MKLKYNKLLVSVVIVTFVTFGLLLAECFGKS) is a signal peptide. The next 11 membrane-spanning stretches (helical) occupy residues 446–466 (TIHF…IFVW), 474–494 (AFMF…VCST), 496–516 (GVIV…LANL), 589–609 (WGCT…FIDS), 737–757 (GVIL…LLFI), 902–922 (AVGV…LFAF), 928–948 (AGIF…TPTI), 952–972 (FLFS…VHLF), 979–999 (IYTN…FCAL), 1034–1054 (IAQF…ICSI), and 1060–1080 (IFFV…FNSI). The segment at 1133-1273 (EFSIKRSSPP…RERNLMNKRS (141 aa)) is interaction with fem-3. Disordered stretches follow at residues 1142 to 1194 (PCRY…GDNT) and 1267 to 1330 (NLMN…VDEP). Residues 1178–1188 (RSPKTGNKRVR) show a composition bias toward basic residues. A compositionally biased stretch (basic and acidic residues) spans 1276–1310 (QRRESRNIEKMKKSQENLDKEKSEEKISESKKNQD). Residues 1392 to 1413 (CEDIYWTHRTGQLPPGLQVPRR) are MX regulatory domain; required for tra-1 binding. Positions 1424-1475 (TPPPEDLNWVPPAESPPIPIPQQAFDLLEERRRNHREQQDEAREGDLSDPEV) are disordered. A compositionally biased stretch (basic and acidic residues) spans 1451–1469 (LEERRRNHREQQDEAREGD).

In terms of assembly, interacts with tra-1 and fem-3. In terms of processing, undergoes cleavage by tra-3 to produce a feminizing carboxy-terminal isoform Tra-2B. In terms of tissue distribution, somatic and germline tissues. Isoform Tra-2B is specific to oocytes.

The protein localises to the membrane. Plays a major role in controlling sexual cell fates. Promotes female development in XX animals where it sequesters one or more of the FEM proteins to the membrane thereby freeing the tra-1 protein (a putative transcription factor) to enter the nucleus and promote female development. In XO animals it acts as a receptor for her-1 which prevents it from binding to FEM proteins thereby repressing the activity of tra-1. Negatively regulates male development when bound to fem-3 and is required together with tra-1 for promoting spermatogenesis. Also required for feminizing tra-3 activity. This is Sex-determining transformer protein 2 (tra-2) from Caenorhabditis elegans.